We begin with the raw amino-acid sequence, 802 residues long: Leucine--tRNA ligase (802 aa).

The 'HIGH' region motif lies at 39–50 (PYPSGAGLHVGH). The 'KMSKS' region motif lies at 574 to 578 (KMSKS). Residue K577 participates in ATP binding.

This sequence belongs to the class-I aminoacyl-tRNA synthetase family.

The protein localises to the cytoplasm. It carries out the reaction tRNA(Leu) + L-leucine + ATP = L-leucyl-tRNA(Leu) + AMP + diphosphate. The protein is Leucine--tRNA ligase of Macrococcus caseolyticus (strain JCSC5402) (Macrococcoides caseolyticum).